Consider the following 234-residue polypeptide: Large ribosomal subunit protein uL1 (234 aa).

This sequence belongs to the universal ribosomal protein uL1 family. As to quaternary structure, part of the 50S ribosomal subunit.

Functionally, binds directly to 23S rRNA. The L1 stalk is quite mobile in the ribosome, and is involved in E site tRNA release. Protein L1 is also a translational repressor protein, it controls the translation of the L11 operon by binding to its mRNA. The sequence is that of Large ribosomal subunit protein uL1 from Tolumonas auensis (strain DSM 9187 / NBRC 110442 / TA 4).